A 774-amino-acid polypeptide reads, in one-letter code: Protein translocase subunit SecA (774 aa).

ATP is bound by residues Q66, 84–88, and D474; that span reads GEGKS.

It belongs to the SecA family.

The protein localises to the plastid. Its subcellular location is the chloroplast stroma. It localises to the chloroplast thylakoid membrane. The catalysed reaction is ATP + H2O + cellular proteinSide 1 = ADP + phosphate + cellular proteinSide 2.. In terms of biological role, has a central role in coupling the hydrolysis of ATP to the transfer of proteins across the thylakoid membrane. The chain is Protein translocase subunit SecA from Cyanidioschyzon merolae (strain NIES-3377 / 10D) (Unicellular red alga).